Reading from the N-terminus, the 142-residue chain is Large ribosomal subunit protein uL13 (142 aa).

The protein belongs to the universal ribosomal protein uL13 family. As to quaternary structure, part of the 50S ribosomal subunit.

In terms of biological role, this protein is one of the early assembly proteins of the 50S ribosomal subunit, although it is not seen to bind rRNA by itself. It is important during the early stages of 50S assembly. The chain is Large ribosomal subunit protein uL13 from Syntrophobacter fumaroxidans (strain DSM 10017 / MPOB).